Consider the following 510-residue polypeptide: Propionyl-CoA carboxylase beta chain (510 aa).

The region spanning 1–257 is the CoA carboxyltransferase N-terminal domain; sequence MKDILQELEN…SNRTPAPVRP (257 aa). Residues 1 to 504 are carboxyltransferase; sequence MKDILQELEN…NKKLANPWKK (504 aa). Residues 264-504 enclose the CoA carboxyltransferase C-terminal domain; it reads RIEDSLDTLI…NKKLANPWKK (241 aa).

This sequence belongs to the AccD/PCCB family. As to quaternary structure, probably a dodecamer composed of six biotin-containing alpha subunits and six beta subunits.

It catalyses the reaction propanoyl-CoA + hydrogencarbonate + ATP = (S)-methylmalonyl-CoA + ADP + phosphate + H(+). It participates in metabolic intermediate metabolism; propanoyl-CoA degradation; succinyl-CoA from propanoyl-CoA: step 1/3. The polypeptide is Propionyl-CoA carboxylase beta chain (Cereibacter sphaeroides (strain ATCC 17023 / DSM 158 / JCM 6121 / CCUG 31486 / LMG 2827 / NBRC 12203 / NCIMB 8253 / ATH 2.4.1.) (Rhodobacter sphaeroides)).